The following is a 523-amino-acid chain: MKKFKRRLSLTLRGSQTIDESLSELAEQMTIEENSSKDNEPIVKNGRPPTSHSMHSFLHQYTGSFKKPPLRRPHSVIGGSLGSFMAMPRNGSRLDIVHENLKMGSDGESDQASGTSSDEVQSPTGVCLRNRIHRRISMEDLNKRLSLPADIRIPDGYLEKLQINSPPFDQPMSRRSRRASLSEIGFGKMETYIKLEKLGEGTYATVYKGRSKLTENLVALKEIRLEHEEGAPCTAIREVSLLKDLKHANIVTLHDIVHTDKSLTLVFEYLDKDLKQYMDDCGNIMSMHNVKLFLYQILRGLAYCHRRKVLHRDLKPQNLLINEKGELKLADFGLARAKSVPTKTYSNEVVTLWYRPPDVLLGSSEYSTQIDMWGVGCIFFEMASGRPLFPGSTVEDELHLIFRLLGTPSQETWPGISSNEEFKNYNFPKYKPQPLINHAPRLDSEGIELITKFLQYESKKRVSAEEAMKHVYFRSLGPRIHALPESVSIFSLKEIQLQKDPGFRNSSYPETGHGKNRRQSMLF.

The residue at position 9 (S9) is a Phosphoserine. The segment at 30–55 is disordered; that stretch reads TIEENSSKDNEPIVKNGRPPTSHSMH. Residues S80, S92, and S105 each carry the phosphoserine modification. The disordered stretch occupies residues 103–123; it reads MGSDGESDQASGTSSDEVQSP. Over residues 110 to 123 the composition is skewed to polar residues; sequence DQASGTSSDEVQSP. Phosphoserine occurs at positions 137, 146, 165, and 180. The Protein kinase domain maps to 192–473; it reads YIKLEKLGEG…AEEAMKHVYF (282 aa). ATP-binding positions include 198–206 and K221; that span reads LGEGTYATV. D313 serves as the catalytic Proton acceptor. The segment at 501–523 is disordered; that stretch reads PGFRNSSYPETGHGKNRRQSMLF. A compositionally biased stretch (basic residues) spans 514-523; the sequence is GKNRRQSMLF.

It belongs to the protein kinase superfamily. CMGC Ser/Thr protein kinase family. CDC2/CDKX subfamily. Found in a complex containing CABLES1, CDK16 and TDRD7. Interacts with TDRD7.

It catalyses the reaction L-seryl-[protein] + ATP = O-phospho-L-seryl-[protein] + ADP + H(+). The enzyme catalyses L-threonyl-[protein] + ATP = O-phospho-L-threonyl-[protein] + ADP + H(+). Its function is as follows. May play a role in terminally differentiated neurons. Has a Ser/Thr-phosphorylating activity for histone H1. This is Cyclin-dependent kinase 17 (CDK17) from Homo sapiens (Human).